We begin with the raw amino-acid sequence, 341 residues long: L-threonine 3-dehydrogenase (341 aa).

Zn(2+) is bound at residue cysteine 38. Active-site charge relay system residues include threonine 40 and histidine 43. Histidine 63, glutamate 64, cysteine 93, cysteine 96, cysteine 99, and cysteine 107 together coordinate Zn(2+). Residues isoleucine 175, aspartate 195, arginine 200, 262–264, and 286–287 contribute to the NAD(+) site; these read LGI and IY.

The protein belongs to the zinc-containing alcohol dehydrogenase family. As to quaternary structure, homotetramer. Requires Zn(2+) as cofactor.

The protein resides in the cytoplasm. The catalysed reaction is L-threonine + NAD(+) = (2S)-2-amino-3-oxobutanoate + NADH + H(+). Its pathway is amino-acid degradation; L-threonine degradation via oxydo-reductase pathway; glycine from L-threonine: step 1/2. In terms of biological role, catalyzes the NAD(+)-dependent oxidation of L-threonine to 2-amino-3-ketobutyrate. The protein is L-threonine 3-dehydrogenase of Marinomonas sp. (strain MWYL1).